The chain runs to 100 residues: Small ribosomal subunit protein uS14c (100 aa).

It belongs to the universal ribosomal protein uS14 family. Part of the 30S ribosomal subunit.

It localises to the plastid. Its subcellular location is the chloroplast. In terms of biological role, binds 16S rRNA, required for the assembly of 30S particles. This chain is Small ribosomal subunit protein uS14c, found in Chaetosphaeridium globosum (Charophycean green alga).